Consider the following 425-residue polypeptide: Orexin/Hypocretin receptor type 1 (425 aa).

A disordered region spans residues 1-24 (MEPSATPGAQMGVPPGSREPSPVP). At 1-46 (MEPSATPGAQMGVPPGSREPSPVPPDYEDEFLRYLWRDYLYPKQYE) the chain is on the extracellular side. Residues 26–41 (DYEDEFLRYLWRDYLY) are required for response to orexin-A. A helical membrane pass occupies residues 47–67 (WVLIAAYVAVFVVALVGNTLV). Residues 68–82 (CLAVWRNHHMRTVTN) lie on the Cytoplasmic side of the membrane. Residues 83–105 (YFIVNLSLADVLVTAICLPASLL) traverse the membrane as a helical segment. Residues 106-119 (VDITESWLFGHALC) lie on the Extracellular side of the membrane. An intrachain disulfide couples Cys119 to Cys202. A helical membrane pass occupies residues 120–140 (KVIPYLQAVSVSVAVLTLSFI). Over 141-160 (ALDRWYAICHPLLFKSTARR) the chain is Cytoplasmic. Residues 161-182 (ARGSILGIWAVSLAIMVPQAAV) form a helical membrane-spanning segment. Over 183-213 (MECSSVLPELANRTRLFSVCDERWADDLYPK) the chain is Extracellular. N-linked (GlcNAc...) asparagine glycosylation is present at Asn194. A helical transmembrane segment spans residues 214–235 (IYHSCFFIVTYLAPLGLMAMAY). Over 236–298 (FQIFRKLWGR…QMRARRKTAK (63 aa)) the chain is Cytoplasmic. Residues 299–321 (MLMVVLLVFALCYLPISVLNVLK) form a helical membrane-spanning segment. Asn318 is a binding site for suvorexant. The Extracellular portion of the chain corresponds to 322–336 (RVFGMFRQASDREAV). A helical transmembrane segment spans residues 337 to 360 (YACFTFSHWLVYANSAANPIIYNF). Over 361–425 (LSGKFREQFK…VLTSVTTVLP (65 aa)) the chain is Cytoplasmic.

The protein belongs to the G-protein coupled receptor 1 family.

Its subcellular location is the cell membrane. In terms of biological role, moderately selective excitatory receptor for orexin-A and, with a lower affinity, for orexin-B neuropeptide. Triggers an increase in cytoplasmic Ca(2+) levels in response to orexin-A binding. This chain is Orexin/Hypocretin receptor type 1, found in Homo sapiens (Human).